Reading from the N-terminus, the 524-residue chain is Mitochondrial-processing peptidase subunit alpha (524 aa).

The transit peptide at 1 to 32 (MATAVWAAARLLRGSAALCARPKFGSPAHRRF) directs the protein to the mitochondrion. An N6-succinyllysine modification is found at Lys-63.

This sequence belongs to the peptidase M16 family. As to quaternary structure, heterodimer of PMPCA (alpha) and PMPCB (beta) subunits, forming the mitochondrial processing protease (MPP) in which PMPCA is involved in substrate recognition and binding and PMPCB is the catalytic subunit.

The protein resides in the mitochondrion matrix. Its subcellular location is the mitochondrion inner membrane. In terms of biological role, substrate recognition and binding subunit of the essential mitochondrial processing protease (MPP), which cleaves the mitochondrial sequence off newly imported precursors proteins. This Rattus norvegicus (Rat) protein is Mitochondrial-processing peptidase subunit alpha (Pmpca).